The following is a 251-amino-acid chain: Meso-2,3-butanediol dehydrogenase (251 aa).

Residues N15, M17, D36, D60, V61, and N87 each contribute to the NAD(+) site. Residues S138, S140, and Y151 each contribute to the (R)-acetoin site. (S)-acetoin is bound at residue S138. NAD(+) is bound by residues Y151, K155, V184, and T186. (S)-acetoin is bound at residue Y151. Y151 functions as the Proton acceptor in the catalytic mechanism.

Belongs to the short-chain dehydrogenases/reductases (SDR) family. Homotetramer; dimer of dimers.

It catalyses the reaction (R,S)-butane-2,3-diol + NAD(+) = (R)-acetoin + NADH + H(+). The catalysed reaction is (S,S)-butane-2,3-diol + NAD(+) = (S)-acetoin + NADH + H(+). The enzyme catalyses (S)-acetoin + NAD(+) = diacetyl + NADH + H(+). Oxidation of meso-2,3-butanediol is enhanced in the presence of Fe(2+). Reduction of diacetyl and (3S/3R)-acetoin is slightly enhanced in the presence of Mg(2+) and Mn(2+). Activity is inhibited by several metal ions, particularly Fe(3+) for reduction of diacetyl and acetoin. Catalyzes the NAD-dependent oxidation of meso-2,3-butanediol to (3R)-acetoin, and of (2S,3S)-2,3-butanediol to (3S)-acetoin, with much lower efficiency. Can also oxidize several primary alcohols such as glycerol, 1-2-pentanediol and 1,2-propanediol, with lower activity. Cannot use (2R,3R)-2,3-butanediol. In the presence of NADH, catalyzes the reduction of (3R)-acetoin to meso-2,3-butanediol, of (3S)-acetoin to (2S,3S)-2,3-butanediol and of diacetyl to (3S)-acetoin. No activity is detected with NADPH/NADP(+). This Serratia marcescens protein is Meso-2,3-butanediol dehydrogenase.